We begin with the raw amino-acid sequence, 439 residues long: Lactamase-like protein nscB (439 aa).

Positions 214, 216, 218, and 219 each coordinate Zn(2+). The active-site Proton donor/acceptor is aspartate 218.

This sequence belongs to the metallo-beta-lactamase superfamily. Zn(2+) serves as cofactor.

It participates in secondary metabolite biosynthesis. Lactamase-like protein; part of the gene cluster that mediates the biosynthesis of neosartoricin B, a prenylated anthracenone that probably exhibits T-cell antiproliferative activity, suggestive of a physiological role as an immunosuppressive agent. The non-reducing polyketide synthase nscA probably synthesizes and cyclizes the decaketide backbone. The hydrolase nscB then mediates the product release through hydrolysis followed by spontaneous decarboxylation. The prenyltransferase nscD catalyzes the addition of the dimethylallyl group to the aromatic C5. The FAD-dependent monooxygenase nscC is then responsible for the stereospecific hydroxylation at C2. Neosartoricin B can be converted into two additional compounds neosartoricins C and D. Neosartoricin C is a spirocyclic compound that is cyclized through the attack of C3 hydroxyl on C14, followed by dehydration. On the other hand, neosartoricin D is a further cyclized compound in which attack of C2 on C14 in neosartoricin C results in the formation of the acetal-containing dioxabicyclo-octanone ring. Both of these compounds are novel and possibly represent related metabolites of the gene cluster. The polypeptide is Lactamase-like protein nscB (Arthroderma benhamiae (strain ATCC MYA-4681 / CBS 112371) (Trichophyton mentagrophytes)).